The primary structure comprises 452 residues: Maltoporin (452 aa).

The first 25 residues, 1 to 25 (MMITLRKLPLAVAVAAGVMSAQAMA), serve as a signal peptide directing secretion.

The protein belongs to the porin LamB (TC 1.B.3) family. In terms of assembly, homotrimer formed of three 18-stranded antiparallel beta-barrels, containing three independent channels.

The protein resides in the cell outer membrane. It carries out the reaction beta-maltose(in) = beta-maltose(out). Functionally, involved in the transport of maltose and maltodextrins. The chain is Maltoporin from Salmonella choleraesuis (strain SC-B67).